An 83-amino-acid polypeptide reads, in one-letter code: Small ribosomal subunit protein eS21 (83 aa).

It belongs to the eukaryotic ribosomal protein eS21 family. In terms of assembly, component of the 40S small ribosomal subunit.

The protein resides in the cytoplasm. Its subcellular location is the cytosol. The protein localises to the rough endoplasmic reticulum. Component of the small ribosomal subunit. The ribosome is a large ribonucleoprotein complex responsible for the synthesis of proteins in the cell. This is Small ribosomal subunit protein eS21 (rps21) from Xenopus laevis (African clawed frog).